The primary structure comprises 138 residues: Phospholipase A2 EC3 (138 aa).

Positions 1 to 16 (MRTLWIVAVWLMGVEG) are cleaved as a signal peptide. 7 cysteine pairs are disulfide-bonded: C42/C131, C44/C60, C59/C111, C65/C138, C66/C104, C73/C97, and C91/C102. Residues Y43, G45, and G47 each contribute to the Ca(2+) site. H63 is an active-site residue. D64 is a binding site for Ca(2+). D105 is an active-site residue.

It belongs to the phospholipase A2 family. Group II subfamily. The cofactor is Ca(2+).

The protein resides in the secreted. The catalysed reaction is a 1,2-diacyl-sn-glycero-3-phosphocholine + H2O = a 1-acyl-sn-glycero-3-phosphocholine + a fatty acid + H(+). Functionally, PA2 catalyzes the calcium-dependent hydrolysis of the 2-acyl groups in 3-sn-phosphoglycerides. This Echis coloratus (Carpet viper) protein is Phospholipase A2 EC3.